We begin with the raw amino-acid sequence, 258 residues long: UPF0246 protein Asuc_0575 (258 aa).

It belongs to the UPF0246 family.

In Actinobacillus succinogenes (strain ATCC 55618 / DSM 22257 / CCUG 43843 / 130Z), this protein is UPF0246 protein Asuc_0575.